The sequence spans 282 residues: NADPH-dependent 7-cyano-7-deazaguanine reductase (282 aa).

88 to 90 (IES) contributes to the substrate binding site. 90–91 (SK) provides a ligand contact to NADPH. C190 functions as the Thioimide intermediate in the catalytic mechanism. D197 (proton donor) is an active-site residue. A substrate-binding site is contributed by 229–230 (HE). 258–259 (RG) contributes to the NADPH binding site.

This sequence belongs to the GTP cyclohydrolase I family. QueF type 2 subfamily. Homodimer.

The protein resides in the cytoplasm. The catalysed reaction is 7-aminomethyl-7-carbaguanine + 2 NADP(+) = 7-cyano-7-deazaguanine + 2 NADPH + 3 H(+). Its pathway is tRNA modification; tRNA-queuosine biosynthesis. Catalyzes the NADPH-dependent reduction of 7-cyano-7-deazaguanine (preQ0) to 7-aminomethyl-7-deazaguanine (preQ1). This Citrobacter koseri (strain ATCC BAA-895 / CDC 4225-83 / SGSC4696) protein is NADPH-dependent 7-cyano-7-deazaguanine reductase.